Consider the following 284-residue polypeptide: 2-dehydro-3-deoxyphosphooctonate aldolase (284 aa).

Belongs to the KdsA family.

The protein resides in the cytoplasm. It catalyses the reaction D-arabinose 5-phosphate + phosphoenolpyruvate + H2O = 3-deoxy-alpha-D-manno-2-octulosonate-8-phosphate + phosphate. The protein operates within carbohydrate biosynthesis; 3-deoxy-D-manno-octulosonate biosynthesis; 3-deoxy-D-manno-octulosonate from D-ribulose 5-phosphate: step 2/3. Its pathway is bacterial outer membrane biogenesis; lipopolysaccharide biosynthesis. The protein is 2-dehydro-3-deoxyphosphooctonate aldolase of Burkholderia multivorans (strain ATCC 17616 / 249).